Consider the following 366-residue polypeptide: 3-isopropylmalate dehydrogenase (366 aa).

Residue 76–89 (GPKWDANPSHLRPE) participates in NAD(+) binding. The substrate site is built by Arg-96, Arg-106, Arg-134, and Asp-219. Residues Asp-219, Asp-243, and Asp-247 each coordinate Mg(2+). 277–289 (GSAPDIAGKGIAN) provides a ligand contact to NAD(+).

The protein belongs to the isocitrate and isopropylmalate dehydrogenases family. LeuB type 1 subfamily. In terms of assembly, homodimer. Mg(2+) serves as cofactor. The cofactor is Mn(2+).

The protein localises to the cytoplasm. The catalysed reaction is (2R,3S)-3-isopropylmalate + NAD(+) = 4-methyl-2-oxopentanoate + CO2 + NADH. Its pathway is amino-acid biosynthesis; L-leucine biosynthesis; L-leucine from 3-methyl-2-oxobutanoate: step 3/4. Its function is as follows. Catalyzes the oxidation of 3-carboxy-2-hydroxy-4-methylpentanoate (3-isopropylmalate) to 3-carboxy-4-methyl-2-oxopentanoate. The product decarboxylates to 4-methyl-2 oxopentanoate. This chain is 3-isopropylmalate dehydrogenase, found in Oceanobacillus iheyensis (strain DSM 14371 / CIP 107618 / JCM 11309 / KCTC 3954 / HTE831).